The chain runs to 351 residues: Protein Wnt-8a (351 aa).

Residues 1–24 (MGNLFMLWAALGICCAAFSASAWS) form the signal peptide. A disulfide bridge links C54 with C65. N103 is a glycosylation site (N-linked (GlcNAc...) asparagine). Cystine bridges form between C104-C112, C114-C132, C180-C194, C182-C189, C259-C297, C275-C290, C294-C336, C312-C327, C314-C324, and C319-C320. A lipid anchor (O-palmitoleoyl serine) is attached at S186. N-linked (GlcNAc...) asparagine glycans are attached at residues N262 and N281.

Belongs to the Wnt family. In terms of assembly, forms a soluble 1:1 complex with AFM; this prevents oligomerization and is required for prolonged biological activity. The complex with AFM may represent the physiological form in body fluids. Palmitoleoylation is required for efficient binding to frizzled receptors. Depalmitoleoylation leads to Wnt signaling pathway inhibition. Post-translationally, proteolytic processing by TIKI1 and TIKI2 promotes oxidation and formation of large disulfide-bond oligomers, leading to inactivation of WNT8A.

The protein localises to the secreted. The protein resides in the extracellular space. Its subcellular location is the extracellular matrix. Ligand for members of the frizzled family of seven transmembrane receptors. Plays a role in embryonic patterning. The chain is Protein Wnt-8a (WNT8A) from Homo sapiens (Human).